The primary structure comprises 281 residues: Large ribosomal subunit protein uL2 (281 aa).

Positions 224-281 (RGSAMNPNDHPHGGGEGHQPIGRKSPMTPWGKKALGVKTRKTKKASNQFIIRRRKESK) are disordered.

It belongs to the universal ribosomal protein uL2 family. Part of the 50S ribosomal subunit. Forms a bridge to the 30S subunit in the 70S ribosome.

Functionally, one of the primary rRNA binding proteins. Required for association of the 30S and 50S subunits to form the 70S ribosome, for tRNA binding and peptide bond formation. It has been suggested to have peptidyltransferase activity; this is somewhat controversial. Makes several contacts with the 16S rRNA in the 70S ribosome. This chain is Large ribosomal subunit protein uL2, found in Metamycoplasma arthritidis (strain 158L3-1) (Mycoplasma arthritidis).